The primary structure comprises 267 residues: Glutamate racemase (267 aa).

Residues 13–14 and 45–46 each bind substrate; these read DS and YS. The Proton donor/acceptor role is filled by Cys77. 78 to 79 serves as a coordination point for substrate; that stretch reads NT. Cys188 acts as the Proton donor/acceptor in catalysis. 189–190 contacts substrate; sequence TH.

It belongs to the aspartate/glutamate racemases family.

It carries out the reaction L-glutamate = D-glutamate. Its pathway is cell wall biogenesis; peptidoglycan biosynthesis. Functionally, provides the (R)-glutamate required for cell wall biosynthesis. This Histophilus somni (strain 129Pt) (Haemophilus somnus) protein is Glutamate racemase.